The chain runs to 635 residues: Threonine--tRNA ligase (635 aa).

The TGS domain maps to 1–61 (MTVVRLPDGT…EIDSDLVLIT (61 aa)). A catalytic region spans residues 242 to 533 (DHRKLGKQLD…LIEHHAGALP (292 aa)). Zn(2+) contacts are provided by Cys333, His384, and His510.

It belongs to the class-II aminoacyl-tRNA synthetase family. As to quaternary structure, homodimer. The cofactor is Zn(2+).

It localises to the cytoplasm. The enzyme catalyses tRNA(Thr) + L-threonine + ATP = L-threonyl-tRNA(Thr) + AMP + diphosphate + H(+). In terms of biological role, catalyzes the attachment of threonine to tRNA(Thr) in a two-step reaction: L-threonine is first activated by ATP to form Thr-AMP and then transferred to the acceptor end of tRNA(Thr). Also edits incorrectly charged L-seryl-tRNA(Thr). The protein is Threonine--tRNA ligase of Nitrosomonas eutropha (strain DSM 101675 / C91 / Nm57).